The primary structure comprises 160 residues: Small ribosomal subunit protein uS7 (160 aa).

It belongs to the universal ribosomal protein uS7 family. As to quaternary structure, part of the 30S ribosomal subunit. Contacts proteins S9 and S11.

Functionally, one of the primary rRNA binding proteins, it binds directly to 16S rRNA where it nucleates assembly of the head domain of the 30S subunit. Is located at the subunit interface close to the decoding center, probably blocks exit of the E-site tRNA. The chain is Small ribosomal subunit protein uS7 from Ehrlichia chaffeensis (strain ATCC CRL-10679 / Arkansas).